The sequence spans 187 residues: Holliday junction resolvase (187 aa).

The protein belongs to the RuvC family. Poxviruses-type subfamily. It depends on Mg(2+) as a cofactor. Acylated by palmitic acid group(s).

Its subcellular location is the membrane. Nuclease that specifically cleaves and resolves four-way DNA Holliday junctions into linear duplex products. In Vaccinia virus (strain Ankara) (VACV), this protein is Holliday junction resolvase.